The following is a 75-amino-acid chain: UPF0291 protein lmo1304 (75 aa).

Residues 56 to 75 (DPNGKDVTPHKVKQLRKNKY) are disordered. Basic residues predominate over residues 65–75 (HKVKQLRKNKY).

Belongs to the UPF0291 family.

The protein resides in the cytoplasm. In Listeria monocytogenes serovar 1/2a (strain ATCC BAA-679 / EGD-e), this protein is UPF0291 protein lmo1304.